We begin with the raw amino-acid sequence, 232 residues long: Large ribosomal subunit protein uL1 (232 aa).

Belongs to the universal ribosomal protein uL1 family. Part of the 50S ribosomal subunit.

Its function is as follows. Binds directly to 23S rRNA. The L1 stalk is quite mobile in the ribosome, and is involved in E site tRNA release. Functionally, protein L1 is also a translational repressor protein, it controls the translation of the L11 operon by binding to its mRNA. The chain is Large ribosomal subunit protein uL1 from Bacteroides fragilis (strain ATCC 25285 / DSM 2151 / CCUG 4856 / JCM 11019 / LMG 10263 / NCTC 9343 / Onslow / VPI 2553 / EN-2).